Reading from the N-terminus, the 274-residue chain is Thiazole synthase (274 aa).

The active-site Schiff-base intermediate with DXP is the Lys-115. 1-deoxy-D-xylulose 5-phosphate-binding positions include Gly-176, 202-203 (AG), and 224-225 (NS).

Belongs to the ThiG family. In terms of assembly, homotetramer. Forms heterodimers with either ThiH or ThiS.

It is found in the cytoplasm. The catalysed reaction is [ThiS sulfur-carrier protein]-C-terminal-Gly-aminoethanethioate + 2-iminoacetate + 1-deoxy-D-xylulose 5-phosphate = [ThiS sulfur-carrier protein]-C-terminal Gly-Gly + 2-[(2R,5Z)-2-carboxy-4-methylthiazol-5(2H)-ylidene]ethyl phosphate + 2 H2O + H(+). It functions in the pathway cofactor biosynthesis; thiamine diphosphate biosynthesis. Catalyzes the rearrangement of 1-deoxy-D-xylulose 5-phosphate (DXP) to produce the thiazole phosphate moiety of thiamine. Sulfur is provided by the thiocarboxylate moiety of the carrier protein ThiS. In vitro, sulfur can be provided by H(2)S. In Parasynechococcus marenigrum (strain WH8102), this protein is Thiazole synthase.